Here is a 753-residue protein sequence, read N- to C-terminus: MSIFNKVTKTFQWGQHTVTMETGEIARQASGAVLVNIDDTVVLATVVASKQAKSGQDFFPLTVDYIEKTYAAGKIPGSFFKREAKPSELETLTSRLIDRPIRPLFPEGFYNDVHVVIHTVSLNPEVDADIAALIATSAALSVSGIPFNGPIGAARVGFINGEYVLNPGQTQRKDSQMDLVVAGTEAAVLMVESEAQQLPEDVMLGAVVFGHEQGRIAIDAIHELVREAGKPVWDWVAPAKDEELIAKVAALGDEALRTAYQIRNKQSRTQACREAYAAVKAGLTAQGVEFDGVKVEGMLFDIEARIVRSQILAGEPRIDGRDTRTVRPIEIRNSVLPRTHGSALFTRGETQALVVSTLGTERDAQRIDALAGEFEDRFLFHYNMPPFATGEVGRMGSTKRREIGHGRLAKRALAACLPSKEEFPYTIRVVSEITESNGSSSMASVCGGCLSMMDAGVPMKAHVAGIAMGLIKEDNRFAVLTDILGDEDHLGDMDFKVAGTTSGITALQMDIKIQGITKEIMQVALAQAKEARMHILGKMQEAMGEAKAEISSFAPKLYTMKINPEKIRDVIGKGGSTIRALTEETGTQIDIGEDGTITIASSDAAKADEAKRRIEEITAEVEIGKIYEGPVTKILDFGALVNLLPGKDGLLHISQIAHERVERVADYLQEGQIIKVKVMETDEKGRVKLSLKALTERPAGMERSDRPAPAEREFRQPREPRQQREFREPREPREPRDGGRPAAEGEQQQQQQQ.

Mg(2+) contacts are provided by Asp488 and Asp494. The 60-residue stretch at 555–614 (PKLYTMKINPEKIRDVIGKGGSTIRALTEETGTQIDIGEDGTITIASSDAAKADEAKRRI) folds into the KH domain. An S1 motif domain is found at 624-692 (GKIYEGPVTK…EKGRVKLSLK (69 aa)). A disordered region spans residues 692-753 (KALTERPAGM…EGEQQQQQQQ (62 aa)). Over residues 699–739 (AGMERSDRPAPAEREFRQPREPRQQREFREPREPREPRDGG) the composition is skewed to basic and acidic residues.

It belongs to the polyribonucleotide nucleotidyltransferase family. Mg(2+) serves as cofactor.

The protein localises to the cytoplasm. It carries out the reaction RNA(n+1) + phosphate = RNA(n) + a ribonucleoside 5'-diphosphate. Functionally, involved in mRNA degradation. Catalyzes the phosphorolysis of single-stranded polyribonucleotides processively in the 3'- to 5'-direction. This chain is Polyribonucleotide nucleotidyltransferase, found in Delftia acidovorans (strain DSM 14801 / SPH-1).